The following is an 87-amino-acid chain: Beta-toxin Cn5 (87 aa).

The signal sequence occupies residues Met1 to Ala19. The LCN-type CS-alpha/beta domain maps to Lys20–Ser85. 4 cysteine pairs are disulfide-bonded: Cys31–Cys84, Cys35–Cys60, Cys44–Cys65, and Cys48–Cys67.

The protein belongs to the long (4 C-C) scorpion toxin superfamily. Sodium channel inhibitor family. Beta subfamily. Expressed by the venom gland.

Its subcellular location is the secreted. Its function is as follows. Beta toxins bind voltage-independently at site-4 of sodium channels (Nav) and shift the voltage of activation toward more negative potentials thereby affecting sodium channel activation and promoting spontaneous and repetitive firing. This toxin is lethal to crustaceans (freshwater crayfish (Cambarellus montezumae spp.)), it provokes a reversible paralysis to insects (crickets (Achaeta spp.)), but is not toxic to mice. At high concentrations, it does displace the (beta) mammal-specific toxin Cn2 from rat brain synaptosomes. The chain is Beta-toxin Cn5 from Centruroides noxius (Mexican scorpion).